The primary structure comprises 747 residues: UPF0313 protein PA4928 (747 aa).

The region spanning 371–640 (AYEMIRFSVN…KSDQQRRLHK (270 aa)) is the Radical SAM core domain. [4Fe-4S] cluster contacts are provided by C385, C389, and C392. A disordered region spans residues 670-747 (GKHHLVPTYQ…KKSRQPNIPR (78 aa)).

It belongs to the UPF0313 family. [4Fe-4S] cluster serves as cofactor.

The polypeptide is UPF0313 protein PA4928 (Pseudomonas aeruginosa (strain ATCC 15692 / DSM 22644 / CIP 104116 / JCM 14847 / LMG 12228 / 1C / PRS 101 / PAO1)).